Here is a 453-residue protein sequence, read N- to C-terminus: Bifunctional protein GlmU (453 aa).

Residues 1–227 (MTQLSVVILA…LMEVEGANNR (227 aa)) are pyrophosphorylase. UDP-N-acetyl-alpha-D-glucosamine contacts are provided by residues 9–12 (LAAG), Lys-23, Gln-74, 79–80 (GT), 101–103 (YGD), Gly-138, Glu-152, Asn-167, and Asn-225. Asp-103 lines the Mg(2+) pocket. Asn-225 is a Mg(2+) binding site. The segment at 228 to 248 (LQLAALERYYQKIQAEKLLLA) is linker. The tract at residues 249–453 (GVTIIDPARF…IQGWQRPTKK (205 aa)) is N-acetyltransferase. UDP-N-acetyl-alpha-D-glucosamine is bound by residues Arg-331 and Lys-349. His-361 (proton acceptor) is an active-site residue. Tyr-364 and Asn-375 together coordinate UDP-N-acetyl-alpha-D-glucosamine. Residues Ala-378, 384–385 (NY), Ser-403, Ala-421, and Arg-438 each bind acetyl-CoA.

This sequence in the N-terminal section; belongs to the N-acetylglucosamine-1-phosphate uridyltransferase family. The protein in the C-terminal section; belongs to the transferase hexapeptide repeat family. In terms of assembly, homotrimer. It depends on Mg(2+) as a cofactor.

It localises to the cytoplasm. It carries out the reaction alpha-D-glucosamine 1-phosphate + acetyl-CoA = N-acetyl-alpha-D-glucosamine 1-phosphate + CoA + H(+). It catalyses the reaction N-acetyl-alpha-D-glucosamine 1-phosphate + UTP + H(+) = UDP-N-acetyl-alpha-D-glucosamine + diphosphate. The protein operates within nucleotide-sugar biosynthesis; UDP-N-acetyl-alpha-D-glucosamine biosynthesis; N-acetyl-alpha-D-glucosamine 1-phosphate from alpha-D-glucosamine 6-phosphate (route II): step 2/2. It participates in nucleotide-sugar biosynthesis; UDP-N-acetyl-alpha-D-glucosamine biosynthesis; UDP-N-acetyl-alpha-D-glucosamine from N-acetyl-alpha-D-glucosamine 1-phosphate: step 1/1. Its pathway is bacterial outer membrane biogenesis; LPS lipid A biosynthesis. Its function is as follows. Catalyzes the last two sequential reactions in the de novo biosynthetic pathway for UDP-N-acetylglucosamine (UDP-GlcNAc). The C-terminal domain catalyzes the transfer of acetyl group from acetyl coenzyme A to glucosamine-1-phosphate (GlcN-1-P) to produce N-acetylglucosamine-1-phosphate (GlcNAc-1-P), which is converted into UDP-GlcNAc by the transfer of uridine 5-monophosphate (from uridine 5-triphosphate), a reaction catalyzed by the N-terminal domain. The polypeptide is Bifunctional protein GlmU (Glaesserella parasuis serovar 5 (strain SH0165) (Haemophilus parasuis)).